An 854-amino-acid chain; its full sequence is MAGPGYDRVDSKDDEPPNIQIPSRTYGFPPEAFDWSRLPDFDTNFLPPEHVEAFIQALSAPDPIPPTPDGGATGSSSYRLNSPAWHRGSTTSFDLDLARRPESSGVGFHDEDRTARDSPAGAATAAAAGVATPGPPLSRRASSNSLFISARNDWAPISQRRVARAKTAPQSSSRNDKKKKRARSKDETREGYLYPLLKWPLLGVVTCWLVGLSVVHVLARLYITVYERYWAWRGERGRLRRAMRATARYSDWVAAARRMDDFLGNDSWKVDDAFAYYDNKTVRRVLAEMRRSRRRAEEAGGRDTEQGREAIEDLKVLIEACVKNNFAGIENPRLYSQTYYGTKNLVQNFIDEVERSLKFLVETERLSKEEKRVMFKGICANYGRTALCLSGGATFAYYHFGVVKALLEEDYLPDIITGTSGGALVAALVATRTNEELKELLIPALACRITACREPISVWFRRWWATGARFDSVDWARQCAWWTRGSLTFREAYERTGRILNVSCVPADQHSPTILCNYLTSPDCVIWSAVLASAAVPGILNPVVLLMKTRSGQLLPYSFGHKWKDGSLRTDIPIKALNLQFNVNFTIVSQVNPHINLFFFSSRGSVGQPVTHRRGRGWRGGYLGTVLVQFTKLDLTKWLRVLRSLELLPRPLGQDWSLLWLQDFGGTVTVWPRCLLSDFARILSDPDPARLARMIHEGQQSAFPKLRFVANRLRVERLVERGRRENRRGGGLGDGGVGSSGGAGGGAGGGQAEAVAGQAAGPGTGQRRPSFESILSEDDLRSLLKKRRVERGGIGSGETESEDETSDLDADFYEGITYDGGDDDAGLEFGAAGMRQPGVATPAGLGGVERGDLS.

3 disordered regions span residues 1–29 (MAGP…YGFP), 58–138 (LSAP…PPLS), and 159–186 (QRRV…RSKD). Residues 96–116 (DLARRPESSGVGFHDEDRTAR) are compositionally biased toward basic and acidic residues. Over residues 119-132 (PAGAATAAAAGVAT) the composition is skewed to low complexity. Residues 199–219 (WPLLGVVTCWLVGLSVVHVLA) form a helical membrane-spanning segment. Residues 387–578 (LCLSGGATFA…RTDIPIKALN (192 aa)) form the PNPLA domain. A GXSXG motif is present at residues 418–422 (GTSGG). S420 (nucleophile) is an active-site residue. Residue D565 is the Proton acceptor of the active site. 2 disordered regions span residues 724–776 (RENR…SILS) and 791–830 (RGGI…LEFG). Over residues 729–751 (GGGLGDGGVGSSGGAGGGAGGGQ) the composition is skewed to gly residues. Low complexity predominate over residues 752-761 (AEAVAGQAAG). Over residues 799–812 (TESEDETSDLDADF) the composition is skewed to acidic residues.

Belongs to the PLPL family.

The protein resides in the membrane. Its function is as follows. Probable lipid hydrolase. The polypeptide is Patatin-like phospholipase domain-containing protein CHGG_02900 (Chaetomium globosum (strain ATCC 6205 / CBS 148.51 / DSM 1962 / NBRC 6347 / NRRL 1970) (Soil fungus)).